Consider the following 687-residue polypeptide: Adhesion G-protein coupled receptor G1 (687 aa).

Positions Met-1 to Gly-25 are cleaved as a signal peptide. Arg-26–Arg-33 contributes to the heparin binding site. The Extracellular segment spans residues Arg-26–Tyr-402. Disulfide bonds link Cys-35-Cys-91 and Cys-121-Cys-177. N-linked (GlcNAc...) asparagine glycosylation is found at Asn-39, Asn-148, and Asn-171. Leu-190–Pro-200 is a heparin binding site. In terms of domain architecture, GAIN-B spans Asp-224–Val-395. N-linked (GlcNAc...) asparagine glycosylation is found at Asn-234, Asn-303, Asn-324, and Asn-341. Cystine bridges form between Cys-346–Cys-377 and Cys-366–Cys-379. Positions Cys-346–Val-395 are GPS. The segment at Tyr-384–Ala-397 is stachel. Residues Leu-403–Ala-423 traverse the membrane as a helical segment. Topologically, residues Ala-424–Asn-442 are cytoplasmic. The chain crosses the membrane as a helical span at residues Leu-443 to Thr-463. The Extracellular portion of the chain corresponds to Gly-464 to Arg-470. The helical transmembrane segment at Ala-471–Gly-491 threads the bilayer. Topologically, residues Tyr-492–Lys-512 are cytoplasmic. The helical transmembrane segment at Leu-513–Val-533 threads the bilayer. Residues Asp-534–Gly-570 are Extracellular-facing. The helical transmembrane segment at Leu-571–Leu-591 threads the bilayer. The Cytoplasmic portion of the chain corresponds to Arg-592–Val-603. Residues Leu-604–Phe-624 form a helical membrane-spanning segment. Over Ala-625–Gln-630 the chain is Extracellular. The helical transmembrane segment at Leu-631–Trp-651 threads the bilayer. Over Tyr-652–Ile-687 the chain is Cytoplasmic. The disordered stretch occupies residues Ser-664–Ile-687. Residues Ser-678–Ile-687 are compositionally biased toward low complexity.

Belongs to the G-protein coupled receptor 2 family. LN-TM7 subfamily. In terms of assembly, heterodimer of 2 chains generated by proteolytic processing; the large extracellular N-terminal fragment (ADGRG1 NT) and the membrane-bound C-terminal fragment (ADGRG1-CT) predominantly remain associated and non-covalently linked. ADGRG1 NT self-associates in a trans-trans manner; the homophilic interaction enhances receptor signaling. Interacts with TGM2. Interacts with heparin; leading to the reduction of ADGRG1 shedding. Interacts with COL3A1. Part of a GPCR-tetraspanin complex at least consisting of ADGRG1, CD81, eventually CD9, and GNA11 in which CD81 is enhancing the association of ADGRG1 with GNA11. In terms of processing, autoproteolytically cleaved into 2 fragments; the large extracellular N-terminal fragment (ADGRG1 NT) and the membrane-bound C-terminal fragment (ADGRG1 CT) predominantly remain associated and non-covalently linked. Shedding to yield the secreted ADGRG1 N-terminal fragment seems to involve metalloprotease(s). Post-translationally, ubiquitinated. Undergoes polyubiquitination upon activation.

Its subcellular location is the cell membrane. The protein resides in the secreted. It localises to the membrane raft. With respect to regulation, forms a heterodimer of 2 chains generated by proteolytic processing that remain associated through non-covalent interactions mediated by the GAIN-B domain. In the inactivated receptor, the Stachel sequence (also named stalk) is embedded in the GAIN-B domain, where it adopts a beta-strand conformation. On activation, the Stachel moves into the 7 transmembrane region and adopts a twisted hook-shaped configuration that forms contacts within the receptor, leading to coupling of a G-alpha protein, which activates signaling. The cleaved GAIN-B and N-terminal domains can then dissociate from the rest of the receptor. Functionally, adhesion G-protein coupled receptor (aGPCR) for steroid hormone 17alpha-hydroxypregnenolone (17-OH), which is involved in cell adhesion and cell-cell interactions. Ligand binding causes a conformation change that triggers signaling via guanine nucleotide-binding proteins (G proteins) and modulates the activity of downstream effectors, such as RhoA pathway. ADGRG1 is coupled to G(12) and/or G(13) G proteins (GNA12 and GNA13, respectively) and mediates the activation Rho small GTPases. Acts as a potent suppressor of ferroptosis: binding to 17-OH-binding initiates signaling that down-regulates CD36 and alleviates ferroptosis-induced liver injury. Ligand-binding also induces cell adhesion activity via association with proteins such as collagen III/COL3A1 and TGM2. Mediates cell matrix adhesion in developing neurons and hematopoietic stem cells. Involved in cortical development, specifically in maintenance of the pial basement membrane integrity and in cortical lamination: association with COL3A1 in the developing brain inhibits neuronal migration via activation of the RhoA pathway. Together with TGM2, acts as a regulator of myelination and myelin repair in oligodendrocyte precursor cells. Acts as a hemostatic sensor of shear force: G protein-coupled receptor signaling is activated in response to shear force in platelets, promoting G(13) G protein signaling, and platelet shape change and aggregation in a COL3A1-dependent manner. Acts as an inhibitor of VEGFA production thereby inhibiting angiogenesis through a signaling pathway mediated by PRKCA. Plays a role in the maintenance of hematopoietic stem cells in bone marrow niche. Plays an essential role in testis development. In Pongo pygmaeus (Bornean orangutan), this protein is Adhesion G-protein coupled receptor G1 (ADGRG1).